Consider the following 302-residue polypeptide: MEFHLEHPLSHSSLHNNFNDDTDYETLPHSLFLVEFQHMPSSHYFHSLKSSAFLLSNRNQAISSITQYSRKFDDPSLTYLAVNYLDRFLSSEDMPQSKPWILKLISLSCVSLSAKMRKPDMSVSDLPVEGEFFDAQMIERMENVILGALKWRMRSVTPFSFLAFFISLFELKEEDPLLLKHSLKSQTSDLTFSLQHDISFLEFKPSVIAGAALLFASFELCPLQFPCFSNRINQCTYVNKDELMECYKAIQERDIIVGENEGSTETAVNVLDQQFSSCESDKSITITASSSPKRRKTSTRRY.

It belongs to the cyclin family. Cyclin D subfamily.

The protein is Putative cyclin-D6-1 (CYCD6-1) of Arabidopsis thaliana (Mouse-ear cress).